The following is a 1527-amino-acid chain: ATP-binding cassette sub-family C member 3 (1527 aa).

Residues 1 to 32 lie on the Extracellular side of the membrane; it reads MDALCGSGELGSKFWDSNLSVHTENPDLTPCF. Asparagine 18 is a glycosylation site (N-linked (GlcNAc...) asparagine). A helical membrane pass occupies residues 33 to 53; that stretch reads QNSLLAWVPCIYLWVALPCYL. Topologically, residues 54–73 are cytoplasmic; it reads LYLRHHCRGYIILSHLSKLK. Residues 74–94 traverse the membrane as a helical segment; sequence MVLGVLLWCVSWADLFYSFHG. Residues 95–99 are Extracellular-facing; sequence LVHGR. A helical membrane pass occupies residues 100-120; sequence APAPVFFVTPLVVGVTMLLAT. Over 121-132 the chain is Cytoplasmic; it reads LLIQYERLQGVQ. The chain crosses the membrane as a helical span at residues 133–153; that stretch reads SSGVLIIFWFLCVVCAIVPFR. Residues 154–171 are Extracellular-facing; the sequence is SKILLAKAEGEISDPFRF. The chain crosses the membrane as a helical span at residues 172–192; the sequence is TTFYIHFALVLSALILACFRE. Over 193-302 the chain is Cytoplasmic; the sequence is KPPFFSAKNV…RPRKPSFLKA (110 aa). The helical transmembrane segment at 303–323 threads the bilayer; sequence LLATFGSSFLISACFKLIQDL. The region spanning 311 to 594 is the ABC transmembrane type-1 1 domain; sequence FLISACFKLI…LPQLISNLTQ (284 aa). The Extracellular portion of the chain corresponds to 324 to 349; sequence LSFINPQLLSILIRFISNPMAPSWWG. A helical membrane pass occupies residues 350-370; the sequence is FLVAGLMFLCSMMQSLILQHY. Residues 371-426 are Cytoplasmic-facing; sequence YHYIFVTGVKFRTGIMGVIYRKALVITNSVKRASTVGEIVNLMSVDAQRFMDLAPF. Residues 427 to 447 traverse the membrane as a helical segment; it reads LNLLWSAPLQIILAIYFLWQN. At 448–450 the chain is on the extracellular side; that stretch reads LGP. A helical membrane pass occupies residues 451 to 471; sequence SVLAGVAFMVLLIPLNGAVAV. The Cytoplasmic portion of the chain corresponds to 472–533; it reads KMRAFQVKQM…LLRTAAYLHT (62 aa). A helical transmembrane segment spans residues 534–554; the sequence is TTTFTWMCSPFLVTLITLWVY. Residues 555 to 576 are Extracellular-facing; sequence VYVDPNNVLDAEKAFVSVSLFN. The chain crosses the membrane as a helical span at residues 577-597; that stretch reads ILRLPLNMLPQLISNLTQASV. Topologically, residues 598-963 are cytoplasmic; sequence SLKRIQQFLS…VELSVFWDYA (366 aa). In terms of domain architecture, ABC transporter 1 spans 629-851; the sequence is IHSGTFTWAQ…NGSFANFLCN (223 aa). 661 to 668 contacts ATP; the sequence is GPVGCGKS. Phosphoserine occurs at positions 908 and 911. The disordered stretch occupies residues 910 to 932; sequence LSSDGEGQGRPVPRRHLGPSEKV. The chain crosses the membrane as a helical span at residues 964 to 984; it reads KAVGLCTTLAICLLYVGQSAA. The ABC transmembrane type-1 2 domain occupies 971–1252; it reads TLAICLLYVG…MIRMMSDLES (282 aa). Over 985 to 1021 the chain is Extracellular; that stretch reads AIGANVWLSAWTNDAMADSRQNNTSLRLGVYAALGIL. 2 N-linked (GlcNAc...) asparagine glycosylation sites follow: asparagine 1006 and asparagine 1007. The chain crosses the membrane as a helical span at residues 1022-1042; it reads QGFLVMLAAMAMAAGGIQAAR. Residues 1043 to 1085 are Cytoplasmic-facing; it reads VLHQALLHNKIRSPQSFFDTTPSGRILNCFSKDIYVVDEVLAP. Residues 1086 to 1106 form a helical membrane-spanning segment; it reads VILMLLNSFFNAISTLVVIMA. Serine 1107 is a topological domain (extracellular). The chain crosses the membrane as a helical span at residues 1108–1128; that stretch reads TPLFTVVILPLAVLYTLVQRF. The Cytoplasmic portion of the chain corresponds to 1129–1199; that stretch reads YAATSRQLKR…ISNRWLSIGV (71 aa). Residues 1200–1220 traverse the membrane as a helical segment; that stretch reads EFVGNCVVLFAALFAVIGRSS. At 1221–1222 the chain is on the extracellular side; it reads LN. The chain crosses the membrane as a helical span at residues 1223–1243; the sequence is PGLVGLSVSYSLQVTFALNWM. The Cytoplasmic portion of the chain corresponds to 1244–1527; the sequence is IRMMSDLESN…YGMARDAGLA (284 aa). Residues 1291–1523 form the ABC transporter 2 domain; it reads FRNYSVRYRP…RGIFYGMARD (233 aa). 1323-1330 is a binding site for ATP; sequence GRTGAGKS.

Belongs to the ABC transporter superfamily. ABCC family. Conjugate transporter (TC 3.A.1.208) subfamily. Mainly expressed in the liver. Also expressed in small intestine, colon, prostate, testis, brain and at a lower level in the kidney. In testis, localized to peritubular myoid cells, Leydig cells, along the basal membrane of Sertoli cells and moderately in the adluminal compartment of the seminiferous tubules.

It is found in the basolateral cell membrane. The protein localises to the basal cell membrane. The catalysed reaction is taurocholate(in) + ATP + H2O = taurocholate(out) + ADP + phosphate + H(+). It catalyses the reaction glycocholate(in) + ATP + H2O = glycocholate(out) + ADP + phosphate + H(+). It carries out the reaction taurolithocholate 3-sulfate(in) + ATP + H2O = taurolithocholate 3-sulfate(out) + ADP + phosphate + H(+). The enzyme catalyses taurochenodeoxycholate 3-sulfate(in) + ATP + H2O = taurochenodeoxycholate 3-sulfate(out) + ADP + phosphate + H(+). The catalysed reaction is an S-substituted glutathione(in) + ATP + H2O = an S-substituted glutathione(out) + ADP + phosphate + H(+). It catalyses the reaction ATP + H2O + xenobioticSide 1 = ADP + phosphate + xenobioticSide 2.. It carries out the reaction 17beta-estradiol 17-O-(beta-D-glucuronate)(in) + ATP + H2O = 17beta-estradiol 17-O-(beta-D-glucuronate)(out) + ADP + phosphate + H(+). The enzyme catalyses dehydroepiandrosterone 3-sulfate(in) + ATP + H2O = dehydroepiandrosterone 3-sulfate(out) + ADP + phosphate + H(+). The catalysed reaction is leukotriene C4(in) + ATP + H2O = leukotriene C4(out) + ADP + phosphate + H(+). It catalyses the reaction (4Z,15Z)-bilirubin IXalpha C8-beta-D-glucuronoside(in) + ATP + H2O = (4Z,15Z)-bilirubin IXalpha C8-beta-D-glucuronoside(out) + ADP + phosphate + H(+). It carries out the reaction (4Z,15Z)-bilirubin IXalpha C8,C12-beta-D-bisglucuronoside(in) + ATP + H2O = (4Z,15Z)-bilirubin IXalpha C8,C12-beta-D-bisglucuronoside(out) + ADP + phosphate + H(+). Its function is as follows. ATP-dependent transporter of the ATP-binding cassette (ABC) family that binds and hydrolyzes ATP to enable active transport of various substrates including many drugs, toxicants and endogenous compound across cell membranes. Transports glucuronide conjugates such as bilirubin diglucuronide, estradiol-17-beta-o-glucuronide and GSH conjugates such as leukotriene C4 (LTC4). Transports also various bile salts (taurocholate, glycocholate, taurochenodeoxycholate-3-sulfate, taurolithocholate- 3-sulfate). Does not contribute substantially to bile salt physiology but provides an alternative route for the export of bile acids and glucuronides from cholestatic hepatocytes. May contribute to regulate the transport of organic compounds in testes across the blood-testis-barrier. Can confer resistance to various anticancer drugs, methotrexate, tenoposide and etoposide, by decreasing accumulation of these drugs in cells. The sequence is that of ATP-binding cassette sub-family C member 3 from Homo sapiens (Human).